Consider the following 216-residue polypeptide: Acyl-homoserine-lactone synthase (216 aa).

Belongs to the autoinducer synthase family.

The enzyme catalyses a fatty acyl-[ACP] + S-adenosyl-L-methionine = an N-acyl-L-homoserine lactone + S-methyl-5'-thioadenosine + holo-[ACP] + H(+). In terms of biological role, required for the synthesis of OHHL (N-(3-oxohexanoyl)-L-homoserine lactone), an autoinducer molecule which binds to CarR and thus acts in the control of the biosynthesis of carbapenem antibiotics. The protein is Acyl-homoserine-lactone synthase (carI) of Pectobacterium carotovorum subsp. carotovorum (Erwinia carotovora subsp. carotovora).